The sequence spans 331 residues: Betaine-homocysteine S-methyltransferase (331 aa).

The Hcy-binding domain occupies 3-324 (VNQKWNWDTK…TDVLAIRKYV (322 aa)). Residues Cys243, Cys309, and Cys310 each contribute to the Zn(2+) site.

It belongs to the Betaine-homocysteine S-methyltransferase, BHMT family. Requires Zn(2+) as cofactor.

It carries out the reaction L-homocysteine + glycine betaine = N,N-dimethylglycine + L-methionine. It functions in the pathway amino-acid biosynthesis; L-methionine biosynthesis via de novo pathway. Functionally, involved in the regulation of homocysteine metabolism. Converts betaine and homocysteine to dimethylglycine and methionine, respectively. This Drosophila melanogaster (Fruit fly) protein is Betaine-homocysteine S-methyltransferase.